A 483-amino-acid polypeptide reads, in one-letter code: Phosphoenolpyruvate carboxylase (483 aa).

The segment at 1 to 20 is disordered; that stretch reads MKVPRCMSTQHPDNVNPPFF.

Belongs to the PEPCase type 2 family. Homotetramer. Mg(2+) is required as a cofactor.

It catalyses the reaction oxaloacetate + phosphate = phosphoenolpyruvate + hydrogencarbonate. Inhibited by NaCl, KCl, ATP, ADP, GTP and aspartate. Unlike E.coli, not regulated by acetyl-CoA. Functionally, catalyzes the irreversible beta-carboxylation of phosphoenolpyruvate (PEP) to form oxaloacetate (OAA), a four-carbon dicarboxylic acid source for the tricarboxylic acid cycle. In Methanothermobacter thermautotrophicus (strain ATCC 29096 / DSM 1053 / JCM 10044 / NBRC 100330 / Delta H) (Methanobacterium thermoautotrophicum), this protein is Phosphoenolpyruvate carboxylase (ppcA).